The primary structure comprises 567 residues: Maltase A2 (567 aa).

A signal peptide spans 1–23 (MPKWAHLGLAALLLISTTQEGTA). Residues Asn-30, Asn-124, and Asn-198 are each glycosylated (N-linked (GlcNAc...) asparagine). Asp-226 serves as the catalytic Nucleophile. The Proton donor role is filled by Glu-298. Asn-312 carries N-linked (GlcNAc...) asparagine glycosylation.

It belongs to the glycosyl hydrolase 13 family.

The enzyme catalyses Hydrolysis of terminal, non-reducing (1-&gt;4)-linked alpha-D-glucose residues with release of alpha-D-glucose.. The polypeptide is Maltase A2 (Mal-A2) (Drosophila melanogaster (Fruit fly)).